Here is an 89-residue protein sequence, read N- to C-terminus: Small ribosomal subunit protein uS15 (89 aa).

This sequence belongs to the universal ribosomal protein uS15 family. As to quaternary structure, part of the 30S ribosomal subunit. Forms a bridge to the 50S subunit in the 70S ribosome, contacting the 23S rRNA.

One of the primary rRNA binding proteins, it binds directly to 16S rRNA where it helps nucleate assembly of the platform of the 30S subunit by binding and bridging several RNA helices of the 16S rRNA. Functionally, forms an intersubunit bridge (bridge B4) with the 23S rRNA of the 50S subunit in the ribosome. The protein is Small ribosomal subunit protein uS15 of Shewanella sediminis (strain HAW-EB3).